The primary structure comprises 1173 residues: WASH complex subunit 4 (1173 aa).

N-acetylalanine is present on Ala-2. At Ser-7 the chain carries Phosphoserine. Positions 27 to 56 form a coiled coil; the sequence is QLKNYGRFLEEYTSQLRRIEDALDDLIGDV. A sufficient for interaction with WASHC5 region spans residues 705 to 1173; it reads KDLALFFSLN…STVSADPVVK (469 aa). The span at 1141–1155 shows a compositional bias: basic and acidic residues; sequence AEENQEKKEKEEETK. Positions 1141–1173 are disordered; the sequence is AEENQEKKEKEEETKTSNGDGPESTVSADPVVK. Position 1154 is a phosphothreonine (Thr-1154).

This sequence belongs to the SWIP family. In terms of assembly, component of the WASH core complex also described as WASH regulatory complex (SHRC) composed of WASH (WASHC1, WASH2P or WASH3P), WASHC2 (WASHC2A or WASHC2C), WASHC3, WASHC4 and WASHC5. The WASH core complex associates via WASHC2 with the F-actin-capping protein dimer (formed by CAPZA1, CAPZA2 or CAPZA3 and CAPZB) in a transient or substoichiometric manner which was initially described as WASH complex.

The protein localises to the early endosome. Its function is as follows. Acts as a component of the WASH core complex that functions as a nucleation-promoting factor (NPF) at the surface of endosomes, where it recruits and activates the Arp2/3 complex to induce actin polymerization, playing a key role in the fission of tubules that serve as transport intermediates during endosome sorting. This Mus musculus (Mouse) protein is WASH complex subunit 4.